A 1117-amino-acid chain; its full sequence is Mitochondrial protein cyt-4 (1117 aa).

In terms of domain architecture, RNB spans 561 to 916 (RQDFYTSTVY…LVHWQIQAAL (356 aa)). The tract at residues 705–730 (VVLEVGTPPSAEDEAPTRKMTKPDEL) is disordered. Over residues 719-730 (APTRKMTKPDEL) the composition is skewed to basic and acidic residues.

It belongs to the RNR ribonuclease family. In terms of assembly, homodimer.

Its subcellular location is the mitochondrion. Functionally, required for RNA 5'- and 3'-end processing and splicing. May act on the RNA processing enzymes directly, or it may act on other regulatory molecules, which influence the activity or synthesis of these enzymes. The polypeptide is Mitochondrial protein cyt-4 (cyt-4) (Neurospora crassa (strain ATCC 24698 / 74-OR23-1A / CBS 708.71 / DSM 1257 / FGSC 987)).